Reading from the N-terminus, the 623-residue chain is ATPase expression protein 3 (623 aa).

PPR repeat units follow at residues 217 to 251 (SVQC…GCKP), 252 to 292 (NTTT…NGIF), 362 to 396 (NLKF…QLKF), 405 to 439 (NSET…LVGP), and 445 to 479 (NVNT…SERY).

It localises to the mitochondrion inner membrane. Required for respiration. This chain is ATPase expression protein 3 (AEP3), found in Candida glabrata (strain ATCC 2001 / BCRC 20586 / JCM 3761 / NBRC 0622 / NRRL Y-65 / CBS 138) (Yeast).